A 292-amino-acid polypeptide reads, in one-letter code: Phosphatidylserine decarboxylase proenzyme (292 aa).

Residues aspartate 92, histidine 149, and serine 255 each act as charge relay system; for autoendoproteolytic cleavage activity in the active site. The active-site Schiff-base intermediate with substrate; via pyruvic acid; for decarboxylase activity is the serine 255. Serine 255 carries the post-translational modification Pyruvic acid (Ser); by autocatalysis.

Belongs to the phosphatidylserine decarboxylase family. PSD-B subfamily. Prokaryotic type I sub-subfamily. Heterodimer of a large membrane-associated beta subunit and a small pyruvoyl-containing alpha subunit. The cofactor is pyruvate. In terms of processing, is synthesized initially as an inactive proenzyme. Formation of the active enzyme involves a self-maturation process in which the active site pyruvoyl group is generated from an internal serine residue via an autocatalytic post-translational modification. Two non-identical subunits are generated from the proenzyme in this reaction, and the pyruvate is formed at the N-terminus of the alpha chain, which is derived from the carboxyl end of the proenzyme. The autoendoproteolytic cleavage occurs by a canonical serine protease mechanism, in which the side chain hydroxyl group of the serine supplies its oxygen atom to form the C-terminus of the beta chain, while the remainder of the serine residue undergoes an oxidative deamination to produce ammonia and the pyruvoyl prosthetic group on the alpha chain. During this reaction, the Ser that is part of the protease active site of the proenzyme becomes the pyruvoyl prosthetic group, which constitutes an essential element of the active site of the mature decarboxylase.

It localises to the cell membrane. The catalysed reaction is a 1,2-diacyl-sn-glycero-3-phospho-L-serine + H(+) = a 1,2-diacyl-sn-glycero-3-phosphoethanolamine + CO2. Its pathway is phospholipid metabolism; phosphatidylethanolamine biosynthesis; phosphatidylethanolamine from CDP-diacylglycerol: step 2/2. Its function is as follows. Catalyzes the formation of phosphatidylethanolamine (PtdEtn) from phosphatidylserine (PtdSer). This is Phosphatidylserine decarboxylase proenzyme from Idiomarina loihiensis (strain ATCC BAA-735 / DSM 15497 / L2-TR).